A 440-amino-acid polypeptide reads, in one-letter code: NK1 transcription factor-related protein 1 (440 aa).

Low complexity predominate over residues 1–13; it reads MSTSGPAAPGDVP. 3 disordered regions span residues 1 to 82, 145 to 291, and 342 to 387; these read MSTS…RPTS, GVAA…PRRA, and KWKK…PMGA. The span at 14-31 shows a compositional bias: pro residues; it reads ALPPPPPGPGSGPAPPAP. 2 stretches are compositionally biased toward low complexity: residues 62 to 74 and 145 to 158; these read VPAV…AARP and GVAA…TSAG. A compositionally biased stretch (polar residues) spans 170-181; sequence GYSSGSGRSPTA. A compositionally biased stretch (acidic residues) spans 182–198; that stretch reads DSEDEAPEDEDEEEAPE. Residues 210-222 are compositionally biased toward gly residues; it reads GGSGGLGARGSGC. Low complexity predominate over residues 237–269; the sequence is AAPGPRGNSPGAPGPPATATGAGSAGSTPQGAA. The homeobox DNA-binding region spans 288–347; sequence PRRARTAFTYEQLVALENKFKATRYLSVCERLNLALSLSLTETQVKIWFQNRRTKWKKQN. Positions 356–374 are enriched in gly residues; the sequence is TGGGGGPGPGAGPGAGLPG.

Belongs to the NK-1 homeobox family.

The protein resides in the nucleus. In terms of biological role, may be required for the coordinated crosstalk of factors involved in the maintenance of energy homeostasis, possibly by regulating the transcription of specific factors involved in energy balance. The sequence is that of NK1 transcription factor-related protein 1 from Mus musculus (Mouse).